Reading from the N-terminus, the 360-residue chain is Phenylalanine--tRNA ligase alpha subunit (360 aa).

Residue E260 coordinates Mg(2+).

It belongs to the class-II aminoacyl-tRNA synthetase family. Phe-tRNA synthetase alpha subunit type 1 subfamily. Tetramer of two alpha and two beta subunits. It depends on Mg(2+) as a cofactor.

It is found in the cytoplasm. The enzyme catalyses tRNA(Phe) + L-phenylalanine + ATP = L-phenylalanyl-tRNA(Phe) + AMP + diphosphate + H(+). This chain is Phenylalanine--tRNA ligase alpha subunit, found in Afipia carboxidovorans (strain ATCC 49405 / DSM 1227 / KCTC 32145 / OM5) (Oligotropha carboxidovorans).